We begin with the raw amino-acid sequence, 201 residues long: Achaete-scute complex protein T5 (201 aa).

Positions 1 to 10 (MALGSENHSV) are enriched in polar residues. Positions 1-32 (MALGSENHSVFNDDEESSSAFNGPSVIRRNAR) are disordered. Positions 24–90 (PSVIRRNARE…KMAVEYIRRL (67 aa)) constitute a bHLH domain.

Efficient DNA binding requires dimerization with another bHLH protein. As to expression, l(1)SC, SC and AC strongly label the presumptive stomatogastric nervous system, while ASE is more prominent in the presumptive procephalic lobe.

In terms of biological role, AS-C proteins are involved in the determination of the neuronal precursors in the peripheral nervous system and the central nervous system. This chain is Achaete-scute complex protein T5 (ac), found in Drosophila melanogaster (Fruit fly).